Consider the following 1930-residue polypeptide: Transport and Golgi organization protein 1 homolog (1930 aa).

A signal peptide spans 1-24 (MAAAPGLLFWLFVLGALWWVPGQS). At 25 to 1171 (DLSHGRRFSD…EPAAVPPLES (1147 aa)) the chain is on the lumenal side. An SH3 domain is found at 45–107 (MLMYRGKALE…PKDLIKVLHK (63 aa)). 5 disordered regions span residues 144–263 (LELE…REKT), 317–496 (EEEE…AAEK), 547–737 (LGSS…MNSQ), 754–891 (TKQP…TPEI), and 1018–1149 (TAPL…PVGA). Positions 152-189 (EESKKAEEVSQHREKSPEESRGRELDPVPEPEAFRADS) are enriched in basic and acidic residues. Positions 197-211 (SESTEGLQGQPSAQE) are enriched in polar residues. S229 bears the Phosphoserine mark. A compositionally biased stretch (polar residues) spans 247–256 (ESRTGNSSPA). The segment covering 317 to 330 (EEEEEVEEDADSSD) has biased composition (acidic residues). The span at 338-368 (SDKDEKVPGKPMIEKYLTDKDPNLSEEDKVE) shows a compositional bias: basic and acidic residues. N360 carries N-linked (GlcNAc...) asparagine glycosylation. Positions 420–430 (DSEDEGDDLFV) are enriched in acidic residues. 2 stretches are compositionally biased toward basic and acidic residues: residues 431–442 (EEPKTNDVKDSE) and 451–461 (GEEKDIQESRK). N-linked (GlcNAc...) asparagine glycosylation is present at N631. The segment covering 661-677 (EDGTDAEQARAIRRPQE) has biased composition (basic and acidic residues). Residues 692–701 (DEEEEEEEGD) show a composition bias toward acidic residues. The segment covering 715 to 726 (VSAQQSRENSPS) has biased composition (polar residues). Residues 791–800 (EESHLADMRA) are compositionally biased toward basic and acidic residues. Position 856 is a phosphoserine (S856). The span at 1030–1039 (GWARPGEERQ) shows a compositional bias: basic and acidic residues. 2 stretches are compositionally biased toward polar residues: residues 1040–1054 (PPQQ…TGDL) and 1115–1127 (QPVT…SEVS). Over residues 1128–1137 (QKPDTKKDID) the composition is skewed to basic and acidic residues. Residues 1172–1192 (AFGSLYAFILYLSKMLLATLP) lie within the membrane without spanning it. The Lumenal segment spans residues 1193–1202 (DNVQPGPDFY). Residues 1203–1223 (GLPWQPVIITAVLGIVSFAIF) traverse the membrane as a helical segment. Residues 1224–1930 (SWRTILVVKS…DRSQASKPTP (707 aa)) lie on the Cytoplasmic side of the membrane. 2 coiled-coil regions span residues 1236–1329 (YQVT…KNQD) and 1359–1422 (LNEA…EIAL). The tract at residues 1238 to 1677 (VTEKQISEKL…VIVKPMPGRP (440 aa)) is mediates interaction with MIA2. The interval 1447-1472 (ESEDPDKGGNESDDLANGETGGDRSE) is disordered. The residue at position 1458 (S1458) is a Phosphoserine. Residues 1514–1662 (NLEDQIKKLE…LLEMTQKMAM (149 aa)) are a coiled coil. 3 disordered regions span residues 1669 to 1796 (IVKP…VPLM), 1801 to 1820 (PPPI…FGPR), and 1840 to 1930 (APGV…KPTP). Residues 1677-1694 (PNTQNPPRRGLLSQNGSF) show a composition bias toward polar residues. 2 positions are modified to phosphoserine: S1693 and S1705. The segment covering 1706 to 1715 (PPLPAEPPGR) has biased composition (pro residues). The segment covering 1722-1738 (SRRDTPRSEFGSLDRHL) has biased composition (basic and acidic residues). 4 positions are modified to phosphoserine: S1733, S1754, S1766, and S1770. Over residues 1760–1773 (PVVNSSSRSSSPAK) the composition is skewed to low complexity. A proline-rich domain (PRD); mediates interaction with the COPII coat subunits SEC23A and SEC23B region spans residues 1776-1930 (DEGKVNMAPK…DRSQASKPTP (155 aa)). Residues 1801–1811 (PPPIRYGPPPQ) are compositionally biased toward pro residues. Residue R1805 is modified to Asymmetric dimethylarginine. Residues 1809 to 1869 (PPQLCGGPFG…GHTPFRPPGS (61 aa)) are SEC16A-interacting region (SIR); required for its localization to endoplasmic reticulum exit sites and for its interaction with SEC16A. The span at 1846–1858 (GKRDLPLDPREFL) shows a compositional bias: basic and acidic residues. The segment covering 1881–1898 (RLPPPTHGPQEYPPPPPA) has biased composition (pro residues). S1915 carries the post-translational modification Phosphoserine. A compositionally biased stretch (polar residues) spans 1915-1930 (SPSSVQDRSQASKPTP).

Belongs to the MIA/OTOR family. Tango1 subfamily. In terms of assembly, interacts with MIA2. Interacts (via SH3 domain) with COL7A1. Interacts with the COPII coat subunits SEC23A, SEC23B and maybe SEC24C. May interact with APOB and MIA2. Interacts with SEC16A.

It localises to the endoplasmic reticulum membrane. Its function is as follows. Plays a role in the transport of cargos that are too large to fit into COPII-coated vesicles and require specific mechanisms to be incorporated into membrane-bound carriers and exported from the endoplasmic reticulum. This protein is required for collagen VII (COL7A1) secretion by loading COL7A1 into transport carriers. It may participate in cargo loading of COL7A1 at endoplasmic reticulum exit sites by binding to COPII coat subunits Sec23/24 and guiding SH3-bound COL7A1 into a growing carrier. Does not play a role in global protein secretion and is apparently specific to COL7A1 cargo loading. However, it may participate in secretion of other proteins in cells that do not secrete COL7A1. It is also specifically required for the secretion of lipoproteins by participating in their export from the endoplasmic reticulum. Required for correct assembly of COPII coat components at endoplasmic reticulum exit sites (ERES) and for the localization of SEC16A and membrane-bound ER-resident complexes consisting of MIA2 and PREB/SEC12 to ERES. This chain is Transport and Golgi organization protein 1 homolog, found in Mus musculus (Mouse).